Consider the following 409-residue polypeptide: Lissencephaly-1 homolog (409 aa).

Residues 7 to 39 (RRERSNQAIADYLGSNGYTDALEAFRKEADMPN) enclose the LisH domain. Residues 54-81 (TSVIRLQKKVMELEAKLSEAEKEAIEGA) adopt a coiled-coil conformation. WD repeat units follow at residues 104 to 145 (GHRA…RTLK), 146 to 185 (GHTDSVQDLAFDSHGKLLASCSSDLSIKLWDFQQTFECVK), 189 to 228 (GHDHNVSSVSFVPAGDYLLSASRDKTIKMWEVATGYCVKT), 231 to 270 (GHREWVRMVRVNVDGSLMASCSNDHSVRVWQTNSKECKAE), 273 to 332 (EHEN…CLFT), 335 to 374 (GHDNWVRGIVFHPGGKYMLSASDDKTLRIWDLRNKRCMKT), and 377 to 409 (AHSHFCTSLDMHKSHPYVISGSVDTTVKVWECR).

Belongs to the WD repeat LIS1/nudF family.

It localises to the cytoplasm. The protein resides in the cytoskeleton. Its subcellular location is the microtubule organizing center. The protein localises to the centrosome. Positively regulates the activity of the minus-end directed microtubule motor protein dynein. May enhance dynein-mediated microtubule sliding by targeting dynein to the microtubule plus end. Required for several dynein- and microtubule-dependent processes. This Aedes aegypti (Yellowfever mosquito) protein is Lissencephaly-1 homolog.